Reading from the N-terminus, the 490-residue chain is MMSARSVSPKVLLDISYKPTLPNIMELQNNVIKLIQVEQQAYMQSGYQLQHQQQHLHSHQHHQQHQQQQQQHTQYAPLPSEYAAYGITELEDTDYNIPSNEVLSTSSNQSAQSTSLEMNNNNTSSNNTSSGNNPSGFDGQASSGSSWNEHGKRARSSGDYDCQTGGSLVMQPEHKKLIHQQQQQPQQQQQHQQHIYVDYLPTTVDEVAAAQSCPGVQSTCTSPQSHFDFPDEELPEHKAQVFLPLYNNQQQSQQQPHQQNHAQMHFQNAYRQSFESYEPANSLNGSAYSSSDRDDMEYARHNALSSVSDLNGGVMSPACLADDGSAGSLLDGSDAGGKAFRKPRRRLKRKPSKTEETDEFSNQRVMANVRERQRTQSLNDAFKSLQQIIPTLPSDKLSKIQTLKLATRYIDFLCRMLSSSDISLLKALEAQGSPSAYGSASSLLSAAANGAEADLKCLRKANGAPIIPPEKLSYLFGVWRMEGDAQHQKA.

3 disordered regions span residues 48-74, 98-167, and 330-359; these read QLQHQQQHLHSHQHHQQHQQQQQQHTQ, PSNE…TGGS, and LDGSDAGGKAFRKPRRRLKRKPSKTEETDE. Residues 54-64 show a composition bias toward basic residues; it reads QHLHSHQHHQQ. Low complexity-rich tracts occupy residues 65–74 and 104–135; these read HQQQQQQHTQ and STSSNQSAQSTSLEMNNNNTSSNNTSSGNNPS. A compositionally biased stretch (basic residues) spans 339–351; sequence AFRKPRRRLKRKP. The bHLH domain maps to 362–413; it reads NQRVMANVRERQRTQSLNDAFKSLQQIIPTLPSDKLSKIQTLKLATRYIDFL.

In terms of assembly, efficient DNA binding requires dimerization with another bHLH protein. Homodimer.

Its subcellular location is the nucleus. Involved in the establishment and dorsoventral patterning of germ layers in the embryo. The chain is Protein twist from Drosophila erecta (Fruit fly).